Reading from the N-terminus, the 891-residue chain is DNA mismatch repair protein MutS (891 aa).

ATP is bound at residue 643–650; it reads GPNMGGKS.

It belongs to the DNA mismatch repair MutS family.

In terms of biological role, this protein is involved in the repair of mismatches in DNA. It is possible that it carries out the mismatch recognition step. This protein has a weak ATPase activity. The polypeptide is DNA mismatch repair protein MutS (Xanthomonas campestris pv. campestris (strain ATCC 33913 / DSM 3586 / NCPPB 528 / LMG 568 / P 25)).